Here is a 355-residue protein sequence, read N- to C-terminus: Phosphoribosylformylglycinamidine cyclo-ligase (355 aa).

It belongs to the AIR synthase family.

The protein localises to the cytoplasm. It carries out the reaction 2-formamido-N(1)-(5-O-phospho-beta-D-ribosyl)acetamidine + ATP = 5-amino-1-(5-phospho-beta-D-ribosyl)imidazole + ADP + phosphate + H(+). It participates in purine metabolism; IMP biosynthesis via de novo pathway; 5-amino-1-(5-phospho-D-ribosyl)imidazole from N(2)-formyl-N(1)-(5-phospho-D-ribosyl)glycinamide: step 2/2. The protein is Phosphoribosylformylglycinamidine cyclo-ligase of Beijerinckia indica subsp. indica (strain ATCC 9039 / DSM 1715 / NCIMB 8712).